Reading from the N-terminus, the 398-residue chain is RNA exonuclease 3 (398 aa).

Residues 239–385 (VLALDCEMGF…QDAIAAMDII (147 aa)) enclose the Exonuclease domain.

The protein belongs to the REXO1/REXO3 family.

The protein resides in the cytoplasm. It is found in the nucleus. 3' to 5' exoribonuclease required for proper 3' end maturation of MRP RNA and of the U5L snRNA. The protein is RNA exonuclease 3 (REX3) of Candida glabrata (strain ATCC 2001 / BCRC 20586 / JCM 3761 / NBRC 0622 / NRRL Y-65 / CBS 138) (Yeast).